The chain runs to 360 residues: Protein DVR-1 (360 aa).

Positions 1–16 (MVWLRLWAFLHILAIV) are cleaved as a signal peptide. Positions 17–246 (TLDPELKRRE…LRCKRPRRKR (230 aa)) are excised as a propeptide. N-linked (GlcNAc...) asparagine glycans are attached at residues Asn-113, Asn-181, and Asn-301. Disulfide bonds link Cys-259–Cys-325, Cys-288–Cys-357, and Cys-292–Cys-359.

This sequence belongs to the TGF-beta family. In terms of assembly, homodimer. As to expression, vegetal region of the egg.

The protein localises to the secreted. Serves to facilitate the differentiation of either mesoderm or endoderm either as a cofactor in an instructive signal or by providing permissive environment. The sequence is that of Protein DVR-1 (dvr1) from Xenopus laevis (African clawed frog).